The sequence spans 103 residues: Co-chaperonin GroES (103 aa).

This sequence belongs to the GroES chaperonin family. Heptamer of 7 subunits arranged in a ring. Interacts with the chaperonin GroEL.

The protein localises to the cytoplasm. Its function is as follows. Together with the chaperonin GroEL, plays an essential role in assisting protein folding. The GroEL-GroES system forms a nano-cage that allows encapsulation of the non-native substrate proteins and provides a physical environment optimized to promote and accelerate protein folding. GroES binds to the apical surface of the GroEL ring, thereby capping the opening of the GroEL channel. In Prochlorococcus marinus subsp. pastoris (strain CCMP1986 / NIES-2087 / MED4), this protein is Co-chaperonin GroES.